A 338-amino-acid chain; its full sequence is tRNA N6-adenosine threonylcarbamoyltransferase (338 aa).

Residues His111 and His115 each coordinate Fe cation. Substrate is bound by residues 134-138 (LVSGG), Asp167, Gly180, and Asn272. Position 300 (Asp300) interacts with Fe cation.

This sequence belongs to the KAE1 / TsaD family. The cofactor is Fe(2+).

It is found in the cytoplasm. The catalysed reaction is L-threonylcarbamoyladenylate + adenosine(37) in tRNA = N(6)-L-threonylcarbamoyladenosine(37) in tRNA + AMP + H(+). Functionally, required for the formation of a threonylcarbamoyl group on adenosine at position 37 (t(6)A37) in tRNAs that read codons beginning with adenine. Is involved in the transfer of the threonylcarbamoyl moiety of threonylcarbamoyl-AMP (TC-AMP) to the N6 group of A37, together with TsaE and TsaB. TsaD likely plays a direct catalytic role in this reaction. This is tRNA N6-adenosine threonylcarbamoyltransferase from Shewanella baltica (strain OS223).